We begin with the raw amino-acid sequence, 491 residues long: Beta-galactosidase (491 aa).

The active-site Proton donor is Glu209. Glu389 acts as the Nucleophile in catalysis.

It belongs to the glycosyl hydrolase 1 family.

The enzyme catalyses Hydrolysis of terminal non-reducing beta-D-galactose residues in beta-D-galactosides.. This is Beta-galactosidase (bgaS) from Sulfolobus acidocaldarius (strain ATCC 33909 / DSM 639 / JCM 8929 / NBRC 15157 / NCIMB 11770).